The primary structure comprises 188 residues: Large ribosomal subunit protein eL18 (188 aa).

Residue lysine 119 forms a Glycyl lysine isopeptide (Lys-Gly) (interchain with G-Cter in SUMO2) linkage. Phosphoserine is present on serine 130. The disordered stretch occupies residues 150–188 (RHFGKAPGTPHSHTKPYVRSKGRKFERARGRRASRGYKN). Threonine 158 is subject to Phosphothreonine. Basic residues-rich tracts occupy residues 161–171 (SHTKPYVRSKG) and 178–188 (RGRRASRGYKN). Lysine 164 is covalently cross-linked (Glycyl lysine isopeptide (Lys-Gly) (interchain with G-Cter in SUMO2)).

Belongs to the eukaryotic ribosomal protein eL18 family. Component of the large ribosomal subunit.

The protein localises to the cytoplasm. Its subcellular location is the cytosol. The protein resides in the rough endoplasmic reticulum. In terms of biological role, component of the large ribosomal subunit. The ribosome is a large ribonucleoprotein complex responsible for the synthesis of proteins in the cell. This is Large ribosomal subunit protein eL18 (Rpl18) from Mus musculus (Mouse).